We begin with the raw amino-acid sequence, 132 residues long: Small ribosomal subunit protein uS12 (132 aa).

3-methylthioaspartic acid is present on Asp89. The interval 102–132 (LDTSGVADRKQSRSKYGAKVPKAGAAPAKKK) is disordered. The span at 118–132 (GAKVPKAGAAPAKKK) shows a compositional bias: low complexity.

This sequence belongs to the universal ribosomal protein uS12 family. In terms of assembly, part of the 30S ribosomal subunit. Contacts proteins S8 and S17. May interact with IF1 in the 30S initiation complex.

In terms of biological role, with S4 and S5 plays an important role in translational accuracy. Interacts with and stabilizes bases of the 16S rRNA that are involved in tRNA selection in the A site and with the mRNA backbone. Located at the interface of the 30S and 50S subunits, it traverses the body of the 30S subunit contacting proteins on the other side and probably holding the rRNA structure together. The combined cluster of proteins S8, S12 and S17 appears to hold together the shoulder and platform of the 30S subunit. The protein is Small ribosomal subunit protein uS12 of Chlorobaculum tepidum (strain ATCC 49652 / DSM 12025 / NBRC 103806 / TLS) (Chlorobium tepidum).